We begin with the raw amino-acid sequence, 328 residues long: Malate dehydrogenase (328 aa).

11-17 lines the NAD(+) pocket; the sequence is GAAGQIG. Substrate contacts are provided by arginine 92 and arginine 98. Residues asparagine 105, glutamine 112, and 129–131 contribute to the NAD(+) site; that span reads VGN. Asparagine 131 and arginine 162 together coordinate substrate. The Proton acceptor role is filled by histidine 187.

It belongs to the LDH/MDH superfamily. MDH type 2 family.

It catalyses the reaction (S)-malate + NAD(+) = oxaloacetate + NADH + H(+). Its function is as follows. Catalyzes the reversible oxidation of malate to oxaloacetate. The polypeptide is Malate dehydrogenase (Coxiella burnetii (strain CbuG_Q212) (Coxiella burnetii (strain Q212))).